The following is a 437-amino-acid chain: ATP-dependent protease ATPase subunit HslU (437 aa).

ATP-binding positions include V18, 60–65 (GCGKTE), D250, E315, and R387.

Belongs to the ClpX chaperone family. HslU subfamily. A double ring-shaped homohexamer of HslV is capped on each side by a ring-shaped HslU homohexamer. The assembly of the HslU/HslV complex is dependent on binding of ATP.

It localises to the cytoplasm. In terms of biological role, ATPase subunit of a proteasome-like degradation complex; this subunit has chaperone activity. The binding of ATP and its subsequent hydrolysis by HslU are essential for unfolding of protein substrates subsequently hydrolyzed by HslV. HslU recognizes the N-terminal part of its protein substrates and unfolds these before they are guided to HslV for hydrolysis. The chain is ATP-dependent protease ATPase subunit HslU from Methylobacterium radiotolerans (strain ATCC 27329 / DSM 1819 / JCM 2831 / NBRC 15690 / NCIMB 10815 / 0-1).